The sequence spans 100 residues: uncharacterized protein (100 aa).

A run of 2 helical transmembrane segments spans residues 30 to 50 (FHIP…PLAF) and 69 to 89 (FLLI…LPFF).

The protein resides in the cytoplasm. The protein localises to the nucleus membrane. This is an uncharacterized protein from Schizosaccharomyces pombe (strain 972 / ATCC 24843) (Fission yeast).